The following is a 262-amino-acid chain: Tryptophan synthase alpha chain (262 aa).

Active-site proton acceptor residues include glutamate 47 and aspartate 58.

Belongs to the TrpA family. Tetramer of two alpha and two beta chains.

The enzyme catalyses (1S,2R)-1-C-(indol-3-yl)glycerol 3-phosphate + L-serine = D-glyceraldehyde 3-phosphate + L-tryptophan + H2O. It functions in the pathway amino-acid biosynthesis; L-tryptophan biosynthesis; L-tryptophan from chorismate: step 5/5. Functionally, the alpha subunit is responsible for the aldol cleavage of indoleglycerol phosphate to indole and glyceraldehyde 3-phosphate. This is Tryptophan synthase alpha chain from Chromobacterium violaceum (strain ATCC 12472 / DSM 30191 / JCM 1249 / CCUG 213 / NBRC 12614 / NCIMB 9131 / NCTC 9757 / MK).